We begin with the raw amino-acid sequence, 351 residues long: Mitogen-activated protein kinase 2 (351 aa).

The 289-residue stretch at 16-304 (YEILDVIGEG…AEEALQHNYL (289 aa)) folds into the Protein kinase domain. ATP-binding positions include 22–30 (IGEGAYGIV) and Lys-45. Asp-140 serves as the catalytic Proton acceptor. Thr-176 is modified (phosphothreonine). Residues 176–178 (TEY) carry the TXY motif. The residue at position 178 (Tyr-178) is a Phosphotyrosine.

The protein belongs to the protein kinase superfamily. CMGC Ser/Thr protein kinase family. MAP kinase subfamily. It depends on Mg(2+) as a cofactor. Requires Mn(2+) as cofactor. Dually phosphorylated on Thr-176 and Tyr-178, which activates the enzyme.

It is found in the nucleus. The catalysed reaction is L-seryl-[protein] + ATP = O-phospho-L-seryl-[protein] + ADP + H(+). It carries out the reaction L-threonyl-[protein] + ATP = O-phospho-L-threonyl-[protein] + ADP + H(+). Activated by tyrosine and threonine phosphorylation. Inhibited by the MEK inhibitor U0126 but not by the p38 inhibitor SB203580. Cobalt abolishes kinase activity, while calcium, copper and nickel have little effect on kinase activity. In terms of biological role, serine-threonine protein kinase which may be involved in pheromone signaling. Functionally complements the MAPK pheromone signaling pathway in S.cerevisiae. This chain is Mitogen-activated protein kinase 2, found in Pneumocystis carinii.